Consider the following 198-residue polypeptide: Protein GrpE (198 aa).

It belongs to the GrpE family. As to quaternary structure, homodimer.

It localises to the cytoplasm. Participates actively in the response to hyperosmotic and heat shock by preventing the aggregation of stress-denatured proteins, in association with DnaK and GrpE. It is the nucleotide exchange factor for DnaK and may function as a thermosensor. Unfolded proteins bind initially to DnaJ; upon interaction with the DnaJ-bound protein, DnaK hydrolyzes its bound ATP, resulting in the formation of a stable complex. GrpE releases ADP from DnaK; ATP binding to DnaK triggers the release of the substrate protein, thus completing the reaction cycle. Several rounds of ATP-dependent interactions between DnaJ, DnaK and GrpE are required for fully efficient folding. This chain is Protein GrpE, found in Lysinibacillus sphaericus (Bacillus sphaericus).